We begin with the raw amino-acid sequence, 327 residues long: Malate dehydrogenase (327 aa).

12-18 (GAAGQIG) lines the NAD(+) pocket. Residues R93 and R99 each coordinate substrate. NAD(+) is bound by residues N106, Q113, and 130–132 (VGN). 2 residues coordinate substrate: N132 and R163. Residue H188 is the Proton acceptor of the active site.

This sequence belongs to the LDH/MDH superfamily. MDH type 2 family.

It catalyses the reaction (S)-malate + NAD(+) = oxaloacetate + NADH + H(+). In terms of biological role, catalyzes the reversible oxidation of malate to oxaloacetate. This chain is Malate dehydrogenase, found in Cupriavidus necator (strain ATCC 17699 / DSM 428 / KCTC 22496 / NCIMB 10442 / H16 / Stanier 337) (Ralstonia eutropha).